A 465-amino-acid chain; its full sequence is ATP synthase subunit beta (465 aa).

155 to 162 (GGAGVGKT) is a binding site for ATP.

The protein belongs to the ATPase alpha/beta chains family. In terms of assembly, F-type ATPases have 2 components, CF(1) - the catalytic core - and CF(0) - the membrane proton channel. CF(1) has five subunits: alpha(3), beta(3), gamma(1), delta(1), epsilon(1). CF(0) has three main subunits: a(1), b(2) and c(9-12). The alpha and beta chains form an alternating ring which encloses part of the gamma chain. CF(1) is attached to CF(0) by a central stalk formed by the gamma and epsilon chains, while a peripheral stalk is formed by the delta and b chains.

It is found in the cell membrane. It carries out the reaction ATP + H2O + 4 H(+)(in) = ADP + phosphate + 5 H(+)(out). Produces ATP from ADP in the presence of a proton gradient across the membrane. The catalytic sites are hosted primarily by the beta subunits. In Buchnera aphidicola subsp. Baizongia pistaciae (strain Bp), this protein is ATP synthase subunit beta.